We begin with the raw amino-acid sequence, 188 residues long: GMP synthase [glutamine-hydrolyzing] subunit A (188 aa).

Residues 1–188 (MIVILDNGGQ…FCKVCGYKFE (188 aa)) form the Glutamine amidotransferase type-1 domain. Cys76 acts as the Nucleophile in catalysis. Residues His163 and Glu165 contribute to the active site.

Heterodimer composed of a glutamine amidotransferase subunit (A) and a GMP-binding subunit (B).

The enzyme catalyses XMP + L-glutamine + ATP + H2O = GMP + L-glutamate + AMP + diphosphate + 2 H(+). Its pathway is purine metabolism; GMP biosynthesis; GMP from XMP (L-Gln route): step 1/1. Functionally, catalyzes the synthesis of GMP from XMP. The sequence is that of GMP synthase [glutamine-hydrolyzing] subunit A from Methanocaldococcus jannaschii (strain ATCC 43067 / DSM 2661 / JAL-1 / JCM 10045 / NBRC 100440) (Methanococcus jannaschii).